Reading from the N-terminus, the 872-residue chain is Leucine-rich repeat-containing protein 66 (872 aa).

A helical membrane pass occupies residues 4–24; sequence FYVRVTILVTGLCFVETVTTP. N-linked (GlcNAc...) asparagine glycosylation is found at N45 and N108. LRR repeat units lie at residues 142-164, 165-186, 189-210, 213-234, and 239-259; these read RLQVLILQRNQLSGTPKGLWKLK, SLRSLDLSFNRIVHIGLSDFHG, QLESIYLKSNKICTIHPKAFKG, KLQVVDLRSNALTTLVPIVTIA, and HLELGLADNQWQCSESNVNFQ. The disordered stretch occupies residues 339 to 363; it reads LRGMWPQSPVELRDSQDEQVTDRKD. A compositionally biased stretch (basic and acidic residues) spans 349–363; the sequence is ELRDSQDEQVTDRKD. Residues 371–391 traverse the membrane as a helical segment; it reads LAICLSVFITFVVAFCLGAFA. Residues 467 to 483 are compositionally biased toward polar residues; that stretch reads QMLGSNGTDPGHQQSPE. Disordered regions lie at residues 467 to 501, 560 to 579, 695 to 761, and 776 to 872; these read QMLGSNGTDPGHQQSPEQLKDSNESRSGDSIVLPS, GTFPSSVESRRDDLHPSQPR, NYES…SQRI, and LISG…SKHW. N-linked (GlcNAc...) asparagine glycosylation occurs at N472. Positions 484–493 are enriched in basic and acidic residues; that stretch reads QLKDSNESRS. S718 is subject to Phosphoserine. 3 stretches are compositionally biased toward polar residues: residues 725–736, 746–760, and 785–805; these read SVENDGTSQPLP, SVTSAESVEDLTSQR, and CETNQENDSSSLDPENRSTWP. Residue S752 is modified to Phosphoserine. The span at 831-841 shows a compositional bias: basic and acidic residues; the sequence is VDWHYSLRDLE.

The protein localises to the membrane. The protein is Leucine-rich repeat-containing protein 66 (Lrrc66) of Mus musculus (Mouse).